The primary structure comprises 283 residues: Pantothenate synthetase (283 aa).

An ATP-binding site is contributed by 31–38; that stretch reads MGALHDGH. Catalysis depends on H38, which acts as the Proton donor. Q62 contributes to the (R)-pantoate binding site. Q62 lines the beta-alanine pocket. ATP is bound at residue 148–151; that stretch reads GKKD. Q154 contributes to the (R)-pantoate binding site. Residues V177 and 185–188 contribute to the ATP site; that span reads KSSR.

This sequence belongs to the pantothenate synthetase family. Homodimer.

Its subcellular location is the cytoplasm. The enzyme catalyses (R)-pantoate + beta-alanine + ATP = (R)-pantothenate + AMP + diphosphate + H(+). The protein operates within cofactor biosynthesis; (R)-pantothenate biosynthesis; (R)-pantothenate from (R)-pantoate and beta-alanine: step 1/1. Functionally, catalyzes the condensation of pantoate with beta-alanine in an ATP-dependent reaction via a pantoyl-adenylate intermediate. This chain is Pantothenate synthetase, found in Staphylococcus aureus (strain Mu3 / ATCC 700698).